We begin with the raw amino-acid sequence, 236 residues long: EF-hand domain-containing protein D1 (236 aa).

The segment at 1–48 (MASEELASKLQRRLQWEEGDSGLQPAPGAAPDPEPQPQPPAWAPTARA) is disordered. Positions 28–42 (GAAPDPEPQPQPPAW) are enriched in pro residues. EF-hand domains are found at residues 87–122 (RLIK…LGAP) and 123–158 (QTHL…AAAG). Residues D100, D104, E111, D136, D138, D140, K142, and E147 each coordinate Ca(2+).

The protein resides in the mitochondrion inner membrane. In terms of biological role, acts as a calcium sensor for mitochondrial flash (mitoflash) activation, an event characterized by stochastic bursts of superoxide production. May play a role in neuronal differentiation. This is EF-hand domain-containing protein D1 (EFHD1) from Bos taurus (Bovine).